A 185-amino-acid polypeptide reads, in one-letter code: Ribosome-recycling factor (185 aa).

The protein belongs to the RRF family.

It localises to the cytoplasm. Its function is as follows. Responsible for the release of ribosomes from messenger RNA at the termination of protein biosynthesis. May increase the efficiency of translation by recycling ribosomes from one round of translation to another. This Frankia casuarinae (strain DSM 45818 / CECT 9043 / HFP020203 / CcI3) protein is Ribosome-recycling factor.